Here is a 281-residue protein sequence, read N- to C-terminus: MIETVTDLSRLRGIVADWRRQGLRVALVPTMGNLHAGHFSLVMLARHYADRVVSSVFVNPTQFGPHEDFRRYPRTPEADMRGLEHVGCDVLWLPSVETMYPLGTERTVRLFVPCVSDVLEGTFRPGHFEGVCTVVARLFNQVLPDVAVFGKKDYQQLVVIRQMVVDLAFPIEILGGCIVRESDGLAMSSRNQYLSMQERPQAAEIHRTLIAMRDAVMSGGVHADVEAEAVRRLEAAGFQVDYAVIRLSDLGEPIDGTVISPGIALVAARLGNTRLIDNLEF.

ATP is bound at residue methionine 31–histidine 38. Histidine 38 serves as the catalytic Proton donor. Residue glutamine 62 participates in (R)-pantoate binding. Glutamine 62 serves as a coordination point for beta-alanine. ATP is bound at residue glycine 150–aspartate 153. Glutamine 156 is a (R)-pantoate binding site. ATP-binding positions include valine 179 and methionine 187–arginine 190.

This sequence belongs to the pantothenate synthetase family. As to quaternary structure, homodimer.

It is found in the cytoplasm. It carries out the reaction (R)-pantoate + beta-alanine + ATP = (R)-pantothenate + AMP + diphosphate + H(+). It functions in the pathway cofactor biosynthesis; (R)-pantothenate biosynthesis; (R)-pantothenate from (R)-pantoate and beta-alanine: step 1/1. Its function is as follows. Catalyzes the condensation of pantoate with beta-alanine in an ATP-dependent reaction via a pantoyl-adenylate intermediate. This Xylella fastidiosa (strain 9a5c) protein is Pantothenate synthetase.